A 461-amino-acid polypeptide reads, in one-letter code: Transcription factor phm6 (461 aa).

The segment at residues 18-50 (CNRCRNHKLKCVVTEAPNGTACCQRCIRAMVPC) is a DNA-binding region (zn(2)-C6 fungal-type). Disordered stretches follow at residues 55–79 (RERKKRGSSPRVVPQSPWMHSPWET) and 256–278 (LQTDDSSSTQSESSRSRASVGAT). A compositionally biased stretch (low complexity) spans 256–274 (LQTDDSSSTQSESSRSRAS).

The protein localises to the nucleus. In terms of biological role, transcription factor that regulates the expression of the gene cluster that mediates the biosynthesis of the trans-fused decalin-containing tetramic acid phomasetin. This Pyrenochaetopsis sp protein is Transcription factor phm6.